We begin with the raw amino-acid sequence, 132 residues long: Global transcriptional regulator Spx 2 (132 aa).

Cys10 and Cys13 form a disulfide bridge.

It belongs to the ArsC family. Spx subfamily. As to quaternary structure, interacts with the C-terminal domain of the alpha subunit of the RNAP.

The protein resides in the cytoplasm. Its function is as follows. Global transcriptional regulator that plays a key role in stress response and exerts either positive or negative regulation of genes. Acts by interacting with the C-terminal domain of the alpha subunit of the RNA polymerase (RNAP). This interaction can enhance binding of RNAP to the promoter region of target genes and stimulate their transcription, or block interaction of RNAP with activator. This Lactococcus lactis subsp. lactis (strain IL1403) (Streptococcus lactis) protein is Global transcriptional regulator Spx 2.